The following is a 124-amino-acid chain: Large ribosomal subunit protein bL12 (124 aa).

Belongs to the bacterial ribosomal protein bL12 family. Homodimer. Part of the ribosomal stalk of the 50S ribosomal subunit. Forms a multimeric L10(L12)X complex, where L10 forms an elongated spine to which 2 to 4 L12 dimers bind in a sequential fashion. Binds GTP-bound translation factors.

In terms of biological role, forms part of the ribosomal stalk which helps the ribosome interact with GTP-bound translation factors. Is thus essential for accurate translation. This is Large ribosomal subunit protein bL12 from Burkholderia ambifaria (strain MC40-6).